We begin with the raw amino-acid sequence, 397 residues long: Enoyl-[acyl-carrier-protein] reductase [NADH] FabV (397 aa).

NAD(+) contacts are provided by residues 48-53, 74-75, 111-112, and 139-140; these read GASTGY, FE, DA, and LA. Position 225 (Y225) interacts with substrate. The Proton donor role is filled by Y235. NAD(+) is bound by residues K244 and 273–275; that span reads VVT.

This sequence belongs to the TER reductase family. As to quaternary structure, monomer.

The catalysed reaction is a 2,3-saturated acyl-[ACP] + NAD(+) = a (2E)-enoyl-[ACP] + NADH + H(+). Its pathway is lipid metabolism; fatty acid biosynthesis. With respect to regulation, resistant to triclosan. Functionally, involved in the final reduction of the elongation cycle of fatty acid synthesis (FAS II). Catalyzes the NADH-dependent reduction of the carbon-carbon double bond in the enoyl moiety that is covalently linked to an acyl carrier protein (ACP). The protein is Enoyl-[acyl-carrier-protein] reductase [NADH] FabV of Aeromonas salmonicida (strain A449).